The following is a 407-amino-acid chain: Proteasome-activating nucleotidase (407 aa).

The stretch at 22–67 (KEKTQIAELESKVLRLELKNKDINRENVQIKKENEILKRELDKLRI) forms a coiled coil. Residues 192–197 (GTGKTL) and H331 each bind ATP. Residues 405 to 407 (MYG) are docks into pockets in the proteasome alpha-ring to cause gate opening.

This sequence belongs to the AAA ATPase family. As to quaternary structure, homohexamer. The hexameric complex has a two-ring architecture resembling a top hat that caps the 20S proteasome core at one or both ends. Upon ATP-binding, the C-terminus of PAN interacts with the alpha-rings of the proteasome core by binding to the intersubunit pockets.

It is found in the cytoplasm. Its function is as follows. ATPase which is responsible for recognizing, binding, unfolding and translocation of substrate proteins into the archaeal 20S proteasome core particle. Is essential for opening the gate of the 20S proteasome via an interaction with its C-terminus, thereby allowing substrate entry and access to the site of proteolysis. Thus, the C-termini of the proteasomal ATPase function like a 'key in a lock' to induce gate opening and therefore regulate proteolysis. Unfolding activity requires energy from ATP hydrolysis, whereas ATP binding alone promotes ATPase-20S proteasome association which triggers gate opening, and supports translocation of unfolded substrates. This chain is Proteasome-activating nucleotidase, found in Methanococcus maripaludis (strain DSM 14266 / JCM 13030 / NBRC 101832 / S2 / LL).